The primary structure comprises 432 residues: Glutamate-1-semialdehyde 2,1-aminomutase (432 aa).

Lys-267 carries the post-translational modification N6-(pyridoxal phosphate)lysine.

It belongs to the class-III pyridoxal-phosphate-dependent aminotransferase family. HemL subfamily. As to quaternary structure, homodimer. Pyridoxal 5'-phosphate serves as cofactor.

It is found in the cytoplasm. It carries out the reaction (S)-4-amino-5-oxopentanoate = 5-aminolevulinate. Its pathway is porphyrin-containing compound metabolism; protoporphyrin-IX biosynthesis; 5-aminolevulinate from L-glutamyl-tRNA(Glu): step 2/2. The sequence is that of Glutamate-1-semialdehyde 2,1-aminomutase from Syntrophus aciditrophicus (strain SB).